A 2522-amino-acid chain; its full sequence is Neurogenic locus notch homolog protein 1 (2522 aa).

The signal sequence occupies residues M1–G19. EGF-like domains are found at residues L20–Q57, Y58–L99, V102–Q140, and Q141–K177. Residues L20–Y1730 lie on the Extracellular side of the membrane. Cystine bridges form between C22–C35, C29–C45, C47–C56, C62–C74, C68–C87, C89–C98, C106–C117, C111–C128, C130–C139, C145–C156, C150–C165, C167–C176, C183–C194, C188–C203, C205–C214, C221–C232, C226–C242, C244–C253, C260–C271, C265–C280, C282–C291, C298–C311, C305–C320, C322–C331, C338–C349, C343–C358, C360–C369, C375–C386, C380–C397, C399–C408, C415–C428, C422–C437, and C439–C448. The 37-residue stretch at D179–E215 folds into the EGF-like 5; calcium-binding domain. Residues P217–E254 enclose the EGF-like 6 domain. O-linked (Fuc...) threonine; alternate glycosylation occurs at T231. T231 carries O-linked (GalNAc...) threonine; alternate glycosylation. In terms of domain architecture, EGF-like 7; calcium-binding spans N256–T292. In terms of domain architecture, EGF-like 8; calcium-binding spans D294–S332. An EGF-like 9; calcium-binding domain is found at N334 to H370. Residues L371–N409 form the EGF-like 10 domain. In terms of domain architecture, EGF-like 11; calcium-binding spans D411–E449. T431 and S434 together coordinate Ca(2+). A glycan (O-linked (Glc...) serine) is linked at S434. Positions 451, 452, and 454 each coordinate Ca(2+). An EGF-like 12; calcium-binding domain is found at D451–E487. Intrachain disulfides connect C455-C466, C460-C475, and C477-C486. O-linked (Glc...) serine glycosylation occurs at S457. An O-linked (Fuc...) threonine glycan is attached at T465. The Ca(2+) site is built by D468 and Q469. Residues N489, I490, and E492 each coordinate Ca(2+). Positions N489–Q525 constitute an EGF-like 13; calcium-binding domain. 75 cysteine pairs are disulfide-bonded: C493–C504, C498–C513, C515–C524, C531–C542, C536–C551, C553–C562, C569–C579, C574–C588, C590–C599, C606–C617, C611–C626, C628–C637, C644–C654, C649–C663, C665–C674, C681–C692, C686–C701, C703–C712, C719–C729, C724–C738, C740–C749, C756–C767, C761–C776, C778–C787, C794–C805, C799–C814, C816–C825, C832–C843, C837–C854, C856–C865, C872–C883, C877–C892, C894–C903, C910–C921, C915–C930, C932–C941, C948–C959, C953–C968, C970–C979, C986–C997, C991–C1006, C1008–C1017, C1024–C1035, C1029–C1044, C1046–C1055, C1062–C1073, C1067–C1082, C1084–C1093, C1100–C1121, C1115–C1130, C1132–C1141, C1148–C1159, C1153–C1168, C1170–C1179, C1186–C1197, C1191–C1206, C1208–C1217, C1224–C1243, C1237–C1252, C1254–C1263, C1270–C1283, C1275–C1292, C1294–C1303, C1310–C1321, C1315–C1333, C1335–C1344, C1351–C1362, C1356–C1371, C1373–C1382, C1390–C1401, C1395–C1412, C1414–C1423, C1447–C1470, C1452–C1465, and C1461–C1477. S495 carries an O-linked (Glc...) serine glycan. Positions 506 and 507 each coordinate Ca(2+). The EGF-like 14; calcium-binding domain occupies D527 to E563. The region spanning D565 to D600 is the EGF-like 15; calcium-binding domain. The region spanning D602 to E638 is the EGF-like 16; calcium-binding domain. An EGF-like 17; calcium-binding domain is found at N640–N675. The 37-residue stretch at N677–L713 folds into the EGF-like 18; calcium-binding domain. One can recognise an EGF-like 19; calcium-binding domain in the interval E715–D750. One can recognise an EGF-like 20; calcium-binding domain in the interval N752–Q788. Residues N790 to E826 form the EGF-like 21; calcium-binding domain. In terms of domain architecture, EGF-like 22 spans V828–E866. An EGF-like 23; calcium-binding domain is found at D868–E904. Residue N887 is glycosylated (N-linked (GlcNAc...) asparagine). The EGF-like 24; calcium-binding domain maps to D906–E942. Residues D944 to E980 enclose the EGF-like 25; calcium-binding domain. N958 carries an N-linked (GlcNAc...) asparagine glycan. The 37-residue stretch at N982–Q1018 folds into the EGF-like 26 domain. An EGF-like 27; calcium-binding domain is found at D1020–Q1056. EGF-like domains lie at L1058–D1094 and P1096–E1142. Residues Q1144–S1180 enclose the EGF-like 30; calcium-binding domain. N1178 is a glycosylation site (N-linked (GlcNAc...) asparagine). The EGF-like 31; calcium-binding domain occupies E1182–E1218. The EGF-like 32; calcium-binding domain occupies N1220 to E1264. 4 EGF-like domains span residues D1266–D1304, V1306–E1345, D1347–Q1383, and V1386–H1424. Residue T1400 is glycosylated (O-linked (Fuc...) threonine; alternate). T1400 is a glycosylation site (O-linked (GalNAc...) threonine; alternate). 3 LNR repeats span residues C1447–N1487, C1488–L1529, and Y1530–E1564. The Ca(2+) site is built by N1458, D1473, and D1476. N-linked (GlcNAc...) asparagine glycosylation occurs at N1487. Disulfide bonds link C1488–C1512, C1494–C1507, C1503–C1519, C1534–C1547, and C1543–C1559. A Ca(2+)-binding site is contributed by D1500. N-linked (GlcNAc...) asparagine glycosylation occurs at N1508. Residues D1515, D1518, D1540, D1555, and D1558 each contribute to the Ca(2+) site. N1584 is a glycosylation site (N-linked (GlcNAc...) asparagine). A helical transmembrane segment spans residues A1731 to V1751. At N1752–K2522 the chain is on the cytoplasmic side. ANK repeat units lie at residues D1877–N1920, T1925–V1954, M1958–A1988, D1992–A2021, F2025–M2054, and K2058–I2087. Disordered regions lie at residues M2146–N2229, L2365–S2404, and L2449–K2522. Residues S2184–L2200 show a composition bias toward low complexity. Residues S2218–N2229 are compositionally biased toward polar residues. Residues L2365–N2390 show a composition bias toward low complexity. 2 stretches are compositionally biased toward polar residues: residues S2391–S2404 and L2449–L2469. The segment covering P2479–S2494 has biased composition (low complexity). Positions N2495–R2514 are enriched in polar residues.

Belongs to the NOTCH family. O-glycosylated on the EGF-like domains. Contains both O-linked fucose and O-linked glucose. O-linked glycosylation by galnt11 is involved in determination of left/right symmetry: glycosylation promotes activation of notch1, possibly by promoting cleavage by adam17, modulating the balance between motile and immotile (sensory) cilia at the left-right organiser (LRO). In terms of processing, synthesized in the endoplasmic reticulum as an inactive form which is proteolytically cleaved by a furin-like convertase in the trans-Golgi network before it reaches the plasma membrane to yield an active, ligand-accessible form. Cleavage results in a C-terminal fragment N(TM) and a N-terminal fragment N(EC). Following ligand binding, it is cleaved by adam17 to yield a membrane-associated intermediate fragment called notch extracellular truncation (NEXT). Following endocytosis, this fragment is then cleaved by presenilin dependent gamma-secretase to release a Notch-derived peptide containing the intracellular domain (NICD) from the membrane.

It localises to the cell membrane. Its subcellular location is the nucleus. In terms of biological role, functions as a receptor for membrane-bound ligands Jagged-1 (JAG1), Jagged-2 (JAG2) and Delta-1 (DLL1) to regulate cell-fate determination. Upon ligand activation through the released notch intracellular domain (NICD) it forms a transcriptional activator complex with RBPJ/RBPSUH and activates genes of the enhancer of split locus. Affects the implementation of differentiation, proliferation and apoptotic programs. Involved in angiogenesis; negatively regulates endothelial cell proliferation and migration and angiogenic sprouting. Involved in the maturation of both CD4(+) and CD8(+) cells in the thymus. Important for follicular differentiation and possibly cell fate selection within the follicle. During cerebellar development, functions as a receptor for neuronal DNER and is involved in the differentiation of Bergmann glia. Represses neuronal and myogenic differentiation. May play an essential role in postimplantation development, probably in some aspect of cell specification and/or differentiation. May be involved in mesoderm development, somite formation and neurogenesis. Involved in determination of left/right symmetry by modulating the balance between motile and immotile (sensory) cilia at the left-right organiser (LRO). The protein is Neurogenic locus notch homolog protein 1 (notch1) of Xenopus tropicalis (Western clawed frog).